The primary structure comprises 234 residues: Probable transcriptional regulatory protein PSPPH_2212 (234 aa).

It belongs to the TACO1 family.

The protein resides in the cytoplasm. The polypeptide is Probable transcriptional regulatory protein PSPPH_2212 (Pseudomonas savastanoi pv. phaseolicola (strain 1448A / Race 6) (Pseudomonas syringae pv. phaseolicola (strain 1448A / Race 6))).